The primary structure comprises 616 residues: Dihydroxy-acid dehydratase (616 aa).

Residue D81 coordinates Mg(2+). [2Fe-2S] cluster is bound at residue C122. Positions 123 and 124 each coordinate Mg(2+). The residue at position 124 (K124) is an N6-carboxylysine. C195 lines the [2Fe-2S] cluster pocket. E491 serves as a coordination point for Mg(2+). S517 functions as the Proton acceptor in the catalytic mechanism.

This sequence belongs to the IlvD/Edd family. As to quaternary structure, homodimer. Requires [2Fe-2S] cluster as cofactor. Mg(2+) is required as a cofactor.

The catalysed reaction is (2R)-2,3-dihydroxy-3-methylbutanoate = 3-methyl-2-oxobutanoate + H2O. It carries out the reaction (2R,3R)-2,3-dihydroxy-3-methylpentanoate = (S)-3-methyl-2-oxopentanoate + H2O. It participates in amino-acid biosynthesis; L-isoleucine biosynthesis; L-isoleucine from 2-oxobutanoate: step 3/4. The protein operates within amino-acid biosynthesis; L-valine biosynthesis; L-valine from pyruvate: step 3/4. Functionally, functions in the biosynthesis of branched-chain amino acids. Catalyzes the dehydration of (2R,3R)-2,3-dihydroxy-3-methylpentanoate (2,3-dihydroxy-3-methylvalerate) into 2-oxo-3-methylpentanoate (2-oxo-3-methylvalerate) and of (2R)-2,3-dihydroxy-3-methylbutanoate (2,3-dihydroxyisovalerate) into 2-oxo-3-methylbutanoate (2-oxoisovalerate), the penultimate precursor to L-isoleucine and L-valine, respectively. The protein is Dihydroxy-acid dehydratase of Salmonella paratyphi A (strain ATCC 9150 / SARB42).